A 286-amino-acid chain; its full sequence is MANYQNATELSKLTLGKSTQYCSEYTADLLQGVPRSLNRDDLALNQSNLPFVGEDVWYGYELSWLNGKGKPVVAVAEFRFACTSDNIVESKSFKLYLNSFNQTRFSSIKDVEKVLTKDLSKIAGSEASVNLFGVDHCPALDIAKKSDKCICIDGEDISIDNYQYDPQLLATAQDERSGSQIEEYLVSHLLKSNCLITNQPDWASIYIHYRGKAIDHSSLLKYLISFRQHNEFHEQCVERIYCDLQQFCQLDELTIFARYTRRGGLDINPFRSSHIEQAPFARTLRQ.

88-90 (VES) is a substrate binding site. 90–91 (SK) contributes to the NADPH binding site. Cysteine 194 (thioimide intermediate) is an active-site residue. Residue aspartate 201 is the Proton donor of the active site. A substrate-binding site is contributed by 233–234 (HE). NADPH is bound at residue 262-263 (RG).

This sequence belongs to the GTP cyclohydrolase I family. QueF type 2 subfamily. In terms of assembly, homodimer.

The protein resides in the cytoplasm. It carries out the reaction 7-aminomethyl-7-carbaguanine + 2 NADP(+) = 7-cyano-7-deazaguanine + 2 NADPH + 3 H(+). It functions in the pathway tRNA modification; tRNA-queuosine biosynthesis. Its function is as follows. Catalyzes the NADPH-dependent reduction of 7-cyano-7-deazaguanine (preQ0) to 7-aminomethyl-7-deazaguanine (preQ1). This Colwellia psychrerythraea (strain 34H / ATCC BAA-681) (Vibrio psychroerythus) protein is NADPH-dependent 7-cyano-7-deazaguanine reductase.